We begin with the raw amino-acid sequence, 95 residues long: Small ribosomal subunit protein bS6 (95 aa).

The protein belongs to the bacterial ribosomal protein bS6 family. Part of the 30S ribosomal subunit.

Functionally, binds together with bS18 to 16S ribosomal RNA. In Bacillus subtilis (strain 168), this protein is Small ribosomal subunit protein bS6 (rpsF).